A 469-amino-acid polypeptide reads, in one-letter code: Transcription factor E2FB (469 aa).

2 disordered regions span residues 1–28 (MSEE…PPLV) and 84–118 (QTPV…AGSP). Composition is skewed to polar residues over residues 8–22 (QFPS…SLSS) and 100–118 (SAKS…AGSP). Residues 129-194 (RYDSSLGLLT…TLKNRIQWKG (66 aa)) mediate DNA binding. Residues 202-246 (ETIESIANLQDEVQNLAAEEARLDDQIRESQERLTSLSEDENNKR) are a coiled coil. Residues 210-238 (LQDEVQNLAAEEARLDDQIRESQERLTSL) are leucine-zipper. Positions 319–374 (PQADEPSNVPDEPSNVPDVPSNLPSTSGLPENHDVSMPMKEESTERNMETQEVDDT) are disordered. Over residues 349–374 (ENHDVSMPMKEESTERNMETQEVDDT) the composition is skewed to basic and acidic residues. The tract at residues 403–419 (DYWFRSEVGEVSITDMW) is retinoblastoma protein binding. The interval 426–469 (DWNQMITFDQDHAGPSDNKILEQPQTPSSPTPEESTATRSPTGS) is disordered. The span at 447 to 469 (EQPQTPSSPTPEESTATRSPTGS) shows a compositional bias: low complexity.

It belongs to the E2F/DP family. Heterodimer with DP proteins. Interacts (via dimerization domain) preferentially with DPA, but also with DPB. Interacts with PURA1 and retinoblastoma-related protein RBR1. Component of a DREAM-like complex which modulates a variety of developmentally regulated genes and of the mitotic genes in proliferating and differentiated cells. Interacts with MYB3R4 only at early stages of leaves development. Phosphorylated. As to expression, expressed in proliferating cells and several differentiated tissues. Detected in inflorescence and shoot apical meristems, cotyledonary vascular tissues, leaf primordia, young leaves, base of trichomes, central cylinder and elongation zone of roots, lateral root primordia, flowers, pistils of immature flowers and pollen grains.

The protein resides in the cytoplasm. The protein localises to the nucleus. In terms of biological role, transcription activator that binds DNA cooperatively with DP proteins through the E2 recognition site, 5'-TTTC[CG]CGC-3' found in the promoter region of a number of genes whose products are involved in cell cycle regulation or in DNA replication. The binding of retinoblastoma-related proteins represses transactivation. Involved in the control of cell-cycle progression from G1 to S phase and from G2 to M phase. Stimulates cell proliferation and delays differentiation. Represses cell enlargement and endoreduplication in auxin-free conditions. The protein is Transcription factor E2FB (E2FB) of Arabidopsis thaliana (Mouse-ear cress).